The primary structure comprises 520 residues: Ribonuclease Y (520 aa).

Residues 3–23 traverse the membrane as a helical segment; that stretch reads IEIAIVLILAAAGLGYFVGNM. The KH domain maps to 210-273; sequence SVSVVALPSD…EVAKIALEKL (64 aa). Positions 336-429 constitute an HD domain; it reads VYQHSLEVAF…VQAADALSGA (94 aa).

It belongs to the RNase Y family.

It is found in the cell membrane. Endoribonuclease that initiates mRNA decay. This chain is Ribonuclease Y, found in Geobacter metallireducens (strain ATCC 53774 / DSM 7210 / GS-15).